Reading from the N-terminus, the 114-residue chain is Ribonuclease P protein component (114 aa).

This sequence belongs to the RnpA family. Consists of a catalytic RNA component (M1 or rnpB) and a protein subunit.

The catalysed reaction is Endonucleolytic cleavage of RNA, removing 5'-extranucleotides from tRNA precursor.. Functionally, RNaseP catalyzes the removal of the 5'-leader sequence from pre-tRNA to produce the mature 5'-terminus. It can also cleave other RNA substrates such as 4.5S RNA. The protein component plays an auxiliary but essential role in vivo by binding to the 5'-leader sequence and broadening the substrate specificity of the ribozyme. This Legionella pneumophila (strain Paris) protein is Ribonuclease P protein component.